A 234-amino-acid chain; its full sequence is Ribosomal RNA small subunit methyltransferase G (234 aa).

S-adenosyl-L-methionine contacts are provided by residues G96, L101, 119–121 (DAT), 147–148 (VE), and R161.

It belongs to the methyltransferase superfamily. RNA methyltransferase RsmG family.

The protein resides in the cytoplasm. Its function is as follows. Specifically methylates the N7 position of a guanine in 16S rRNA. This is Ribosomal RNA small subunit methyltransferase G from Chlorobium chlorochromatii (strain CaD3).